The sequence spans 497 residues: Acetyl-coenzyme A carboxylase carboxyl transferase subunit beta, chloroplastic (497 aa).

The 268-residue stretch at 230–497 folds into the CoA carboxyltransferase N-terminal domain; sequence LWVQCENCYG…FFPLNQNSIK (268 aa). 4 residues coordinate Zn(2+): Cys234, Cys237, Cys253, and Cys256. The segment at 234–256 adopts a C4-type zinc-finger fold; sequence CENCYGLNYKKFLKSKMNICEQC.

This sequence belongs to the AccD/PCCB family. In terms of assembly, acetyl-CoA carboxylase is a heterohexamer composed of biotin carboxyl carrier protein, biotin carboxylase and 2 subunits each of ACCase subunit alpha and ACCase plastid-coded subunit beta (accD). The cofactor is Zn(2+).

It localises to the plastid. Its subcellular location is the chloroplast stroma. It catalyses the reaction N(6)-carboxybiotinyl-L-lysyl-[protein] + acetyl-CoA = N(6)-biotinyl-L-lysyl-[protein] + malonyl-CoA. The protein operates within lipid metabolism; malonyl-CoA biosynthesis; malonyl-CoA from acetyl-CoA: step 1/1. Its function is as follows. Component of the acetyl coenzyme A carboxylase (ACC) complex. Biotin carboxylase (BC) catalyzes the carboxylation of biotin on its carrier protein (BCCP) and then the CO(2) group is transferred by the transcarboxylase to acetyl-CoA to form malonyl-CoA. The sequence is that of Acetyl-coenzyme A carboxylase carboxyl transferase subunit beta, chloroplastic from Carica papaya (Papaya).